The primary structure comprises 209 residues: Ribosomal RNA large subunit methyltransferase E (209 aa).

Residues Gly63, Trp65, Asp83, Asp99, and Asp124 each coordinate S-adenosyl-L-methionine. Lys164 acts as the Proton acceptor in catalysis.

Belongs to the class I-like SAM-binding methyltransferase superfamily. RNA methyltransferase RlmE family.

Its subcellular location is the cytoplasm. It catalyses the reaction uridine(2552) in 23S rRNA + S-adenosyl-L-methionine = 2'-O-methyluridine(2552) in 23S rRNA + S-adenosyl-L-homocysteine + H(+). Functionally, specifically methylates the uridine in position 2552 of 23S rRNA at the 2'-O position of the ribose in the fully assembled 50S ribosomal subunit. The polypeptide is Ribosomal RNA large subunit methyltransferase E (Sodalis glossinidius (strain morsitans)).